Here is a 188-residue protein sequence, read N- to C-terminus: Acireductone dioxygenase (188 aa).

Residues histidine 97, histidine 99, glutamate 103, and histidine 141 each coordinate Fe(2+). Residues histidine 97, histidine 99, glutamate 103, and histidine 141 each coordinate Ni(2+).

This sequence belongs to the acireductone dioxygenase (ARD) family. In terms of assembly, monomer. The cofactor is Fe(2+). Ni(2+) is required as a cofactor.

The catalysed reaction is 1,2-dihydroxy-5-(methylsulfanyl)pent-1-en-3-one + O2 = 3-(methylsulfanyl)propanoate + CO + formate + 2 H(+). It catalyses the reaction 1,2-dihydroxy-5-(methylsulfanyl)pent-1-en-3-one + O2 = 4-methylsulfanyl-2-oxobutanoate + formate + 2 H(+). It participates in amino-acid biosynthesis; L-methionine biosynthesis via salvage pathway; L-methionine from S-methyl-5-thio-alpha-D-ribose 1-phosphate: step 5/6. Catalyzes 2 different reactions between oxygen and the acireductone 1,2-dihydroxy-3-keto-5-methylthiopentene (DHK-MTPene) depending upon the metal bound in the active site. Fe-containing acireductone dioxygenase (Fe-ARD) produces formate and 2-keto-4-methylthiobutyrate (KMTB), the alpha-ketoacid precursor of methionine in the methionine recycle pathway. Ni-containing acireductone dioxygenase (Ni-ARD) produces methylthiopropionate, carbon monoxide and formate, and does not lie on the methionine recycle pathway. In Xanthomonas euvesicatoria pv. vesicatoria (strain 85-10) (Xanthomonas campestris pv. vesicatoria), this protein is Acireductone dioxygenase.